The primary structure comprises 372 residues: Chaperone protein DnaJ (372 aa).

A J domain is found at 5 to 69; the sequence is DYYEVLGLSK…QKKAQYDQFG (65 aa). The segment at 129-211 adopts a CR-type zinc-finger fold; the sequence is GAEKEISVKK…CGGTGRKVKT (83 aa). Residues Cys-142, Cys-145, Cys-159, Cys-162, Cys-185, Cys-188, Cys-199, and Cys-202 each coordinate Zn(2+). 4 CXXCXGXG motif repeats span residues 142-149, 159-166, 185-192, and 199-206; these read CDTCDGSG, CSTCGGRG, CPDCGGTG, and CSDCGGTG.

It belongs to the DnaJ family. In terms of assembly, homodimer. Zn(2+) is required as a cofactor.

It is found in the cytoplasm. In terms of biological role, participates actively in the response to hyperosmotic and heat shock by preventing the aggregation of stress-denatured proteins and by disaggregating proteins, also in an autonomous, DnaK-independent fashion. Unfolded proteins bind initially to DnaJ; upon interaction with the DnaJ-bound protein, DnaK hydrolyzes its bound ATP, resulting in the formation of a stable complex. GrpE releases ADP from DnaK; ATP binding to DnaK triggers the release of the substrate protein, thus completing the reaction cycle. Several rounds of ATP-dependent interactions between DnaJ, DnaK and GrpE are required for fully efficient folding. Also involved, together with DnaK and GrpE, in the DNA replication of plasmids through activation of initiation proteins. The polypeptide is Chaperone protein DnaJ (Macrococcus caseolyticus (strain JCSC5402) (Macrococcoides caseolyticum)).